A 274-amino-acid polypeptide reads, in one-letter code: Uridine-5'-phosphate dioxygenase (274 aa).

Positions 103, 105, and 246 each coordinate Fe cation.

Fe(2+) serves as cofactor.

It carries out the reaction UMP + 2-oxoglutarate + O2 = uridine-5'-aldehyde + succinate + phosphate + CO2. It functions in the pathway antibiotic biosynthesis. With respect to regulation, inhibited by several divalent cations, including Zn(2+). Dioxygenase involved in the biosynthesis of the lipopeptidyl nucleoside antibiotic A-90289. Catalyzes the dephosphorylation and oxidation of UMP to generate uridine-5'-aldehyde, the first intermediate in the biosynthesis of A-90289. The polypeptide is Uridine-5'-phosphate dioxygenase (Streptomyces sp).